We begin with the raw amino-acid sequence, 258 residues long: MVLIRVLANLLVLQLSYAQKSSELVIGGDECNINEHRSLVYLYNDSNFQCGGTLINQEWVLSAAHCDMENMEIYLGVHNLSLPNKDQKRRDPKEKFFCLSSKNYTKWDKDIMLIKLNRPVKTSTHIAPLSLPSSPPSVGSVCRIMGWGTVTSPNETLLDVPHCANINILNYTVCRAASPRLPTQSRTLCAGILQGGIDACKGDSGGPLICNGQIQGIVSWGNHPCAQPLKPGHYTHVFDYTDWIQSIIAGNTTATCPP.

A signal peptide spans 1 to 18 (MVLIRVLANLLVLQLSYA). The propeptide occupies 19 to 24 (QKSSEL). One can recognise a Peptidase S1 domain in the interval 25-249 (VIGGDECNIN…YTDWIQSIIA (225 aa)). Disulfide bonds link C31-C163, C50-C66, C98-C256, C142-C210, C174-C189, and C200-C225. An N-linked (GlcNAc...) asparagine glycan is attached at N44. Residue H65 is the Charge relay system of the active site. N-linked (GlcNAc...) asparagine glycosylation is found at N79 and N103. The Charge relay system role is filled by D110. Residues N154 and N170 are each glycosylated (N-linked (GlcNAc...) asparagine). The Charge relay system role is filled by S204. An N-linked (GlcNAc...) asparagine glycan is attached at N251.

Belongs to the peptidase S1 family. Snake venom subfamily. Monomer. Expressed by the venom gland.

Its subcellular location is the secreted. Functionally, snake venom serine protease that may act in the hemostasis system of the prey. In Macrovipera lebetinus (Levantine viper), this protein is Serine protease VLSP-3.